Here is a 131-residue protein sequence, read N- to C-terminus: MRHRKSGRQLNRNSSHRQAMFRNMASSLVRHEIIKTTVAKAKELRRVVEPLITLAKSDSVANRRLAFARTRDAEVVGKLFTELGPRYQERPGGYTRILKCGLRAGDKAPMAYIELVGRPEAAQAVEVEAAE.

It belongs to the bacterial ribosomal protein bL17 family. Part of the 50S ribosomal subunit. Contacts protein L32.

The protein is Large ribosomal subunit protein bL17 of Shewanella sp. (strain ANA-3).